The sequence spans 253 residues: 5'-nucleotidase SurE (253 aa).

A divalent metal cation is bound by residues Asp-8, Asp-9, Ser-39, and Asn-92.

The protein belongs to the SurE nucleotidase family. A divalent metal cation serves as cofactor.

It is found in the cytoplasm. The catalysed reaction is a ribonucleoside 5'-phosphate + H2O = a ribonucleoside + phosphate. In terms of biological role, nucleotidase that shows phosphatase activity on nucleoside 5'-monophosphates. The chain is 5'-nucleotidase SurE from Burkholderia pseudomallei (strain 668).